Consider the following 367-residue polypeptide: MSGNTFGTLFTVTTFGESHGPALGGVVDGCPPGLALTEADLQVELDRRRPGRSKHTTQRRESDQVQILSGVFEGVTTGTPIGLLIENTDQRSKDYSEIAQRFRPGHADYTYQQKYGVRDYRGGGRSSARETAVRVAAGAIARRYLAQRLGIEIRGRLAQMGGIELGAEDWSAVDDNDFFCADPARIPELEALIQEVRKAGDSVGAAVEVEVRHVPPGLGEPVFDRLDADLAKALMSINAVKGVEVGAGMAAAGQRGSAHRDELTPAGFAGNQSGGVLGGISSGQDLVVRAALKPTSSMLIPGRSVDVHGEPVSVVTKGRHDPCVGIRAVPIAEAMAALVVMDHWLRHRAQNADVESGTPVLPARDRE.

Arginine 48 is an NADP(+) binding site. FMN is bound by residues 125–127 (RSS), 238–239 (NA), glycine 278, 293–297 (KPTSS), and arginine 319.

The protein belongs to the chorismate synthase family. In terms of assembly, homotetramer. FMNH2 is required as a cofactor.

The catalysed reaction is 5-O-(1-carboxyvinyl)-3-phosphoshikimate = chorismate + phosphate. The protein operates within metabolic intermediate biosynthesis; chorismate biosynthesis; chorismate from D-erythrose 4-phosphate and phosphoenolpyruvate: step 7/7. Its function is as follows. Catalyzes the anti-1,4-elimination of the C-3 phosphate and the C-6 proR hydrogen from 5-enolpyruvylshikimate-3-phosphate (EPSP) to yield chorismate, which is the branch point compound that serves as the starting substrate for the three terminal pathways of aromatic amino acid biosynthesis. This reaction introduces a second double bond into the aromatic ring system. The polypeptide is Chorismate synthase (Halorhodospira halophila (strain DSM 244 / SL1) (Ectothiorhodospira halophila (strain DSM 244 / SL1))).